A 166-amino-acid chain; its full sequence is Large ribosomal subunit protein uL10 (166 aa).

The protein belongs to the universal ribosomal protein uL10 family. As to quaternary structure, part of the ribosomal stalk of the 50S ribosomal subunit. The N-terminus interacts with L11 and the large rRNA to form the base of the stalk. The C-terminus forms an elongated spine to which L12 dimers bind in a sequential fashion forming a multimeric L10(L12)X complex.

Functionally, forms part of the ribosomal stalk, playing a central role in the interaction of the ribosome with GTP-bound translation factors. The protein is Large ribosomal subunit protein uL10 of Shouchella clausii (strain KSM-K16) (Alkalihalobacillus clausii).